Here is a 686-residue protein sequence, read N- to C-terminus: Zinc finger protein 7 (686 aa).

The region spanning 4 to 76 (VTFGDVAVHF…DLQGAEGTEA (73 aa)) is the KRAB domain. Glycyl lysine isopeptide (Lys-Gly) (interchain with G-Cter in SUMO2) cross-links involve residues Lys-81 and Lys-101. Residues Ser-126 and Ser-138 each carry the phosphoserine modification. 6 C2H2-type zinc fingers span residues 223 to 245 (SRCQ…NNCH), 250 to 272 (YECA…QRIH), 278 to 300 (FKCT…QRIH), 306 to 328 (YRCE…QRIH), 334 to 356 (YGCR…QRTH), and 362 to 384 (YPCK…QRMH). Residues Lys-279 and Lys-292 each participate in a glycyl lysine isopeptide (Lys-Gly) (interchain with G-Cter in SUMO2) cross-link. Lys-393 participates in a covalent cross-link: Glycyl lysine isopeptide (Lys-Gly) (interchain with G-Cter in SUMO2). C2H2-type zinc fingers lie at residues 413 to 435 (FKCD…QLIH), 441 to 463 (YKCN…QRTH), 469 to 491 (FKCD…QRIH), 497 to 519 (YVCN…QRIH), 525 to 547 (YECL…QRVH), 553 to 575 (YKCN…QIIH), 581 to 603 (YECS…QRIH), 634 to 656 (HQCE…QRIH), and 662 to 684 (YKCN…QKIH).

The protein belongs to the krueppel C2H2-type zinc-finger protein family.

It is found in the nucleus. Its function is as follows. May be involved in transcriptional regulation. This is Zinc finger protein 7 (ZNF7) from Pongo abelii (Sumatran orangutan).